Here is a 96-residue protein sequence, read N- to C-terminus: Putative pterin-4-alpha-carbinolamine dehydratase (96 aa).

It belongs to the pterin-4-alpha-carbinolamine dehydratase family.

It catalyses the reaction (4aS,6R)-4a-hydroxy-L-erythro-5,6,7,8-tetrahydrobiopterin = (6R)-L-erythro-6,7-dihydrobiopterin + H2O. The protein is Putative pterin-4-alpha-carbinolamine dehydratase of Prochlorococcus marinus (strain MIT 9215).